The sequence spans 980 residues: Ras and Rab interactor 3 (980 aa).

The tract at residues Met-1 to Thr-40 is disordered. The region spanning Trp-63 to Gln-158 is the SH2 domain. The span at Pro-247–Ala-260 shows a compositional bias: pro residues. Disordered stretches follow at residues Pro-247–Ser-496 and Gln-509–Ser-560. Over residues Thr-261–Gly-271 the composition is skewed to low complexity. The segment covering Arg-274–Pro-308 has biased composition (pro residues). Composition is skewed to polar residues over residues Ile-406–Ser-422 and Gln-484–Gly-494. The span at Gln-514 to Pro-523 shows a compositional bias: low complexity. The interaction with RAB5B stretch occupies residues Phe-584 to Ser-729. One can recognise a VPS9 domain in the interval His-700–Thr-843. In terms of domain architecture, Ras-associating spans Lys-865–Ser-962.

Belongs to the RIN (Ras interaction/interference) family. As to quaternary structure, interacts with CD2AP, RAB5B, RAB31 and BIN1.

It is found in the cytoplasm. Its subcellular location is the cytoplasmic vesicle. The protein resides in the early endosome. Functionally, ras effector protein that functions as a guanine nucleotide exchange (GEF) for RAB5B and RAB31, by exchanging bound GDP for free GTP. Required for normal RAB31 function. The sequence is that of Ras and Rab interactor 3 (Rin3) from Mus musculus (Mouse).